A 202-amino-acid polypeptide reads, in one-letter code: B-cell CLL/lymphoma 7 protein family member B (202 aa).

Residues 53–202 form a disordered region; the sequence is DSKEKEKSKS…PAVPQTASES (150 aa). Positions 90-99 are enriched in polar residues; sequence ENSNQSSVSD. The span at 107-123 shows a compositional bias: low complexity; sequence SSTNSSPSPQQSESLSP. Phosphoserine is present on residues S114, S118, S120, S122, S127, S148, and S152.

It belongs to the BCL7 family.

In terms of biological role, positive regulator of apoptosis. Plays a role in the Wnt signaling pathway, negatively regulating the expression of Wnt signaling components CTNNB1 and HMGA1. Involved in cell cycle progression, maintenance of the nuclear structure and stem cell differentiation. May play a role in lung tumor development or progression. In Bos taurus (Bovine), this protein is B-cell CLL/lymphoma 7 protein family member B (BCL7B).